The sequence spans 234 residues: 2-C-methyl-D-erythritol 4-phosphate cytidylyltransferase (234 aa).

This sequence belongs to the IspD/TarI cytidylyltransferase family. IspD subfamily.

It carries out the reaction 2-C-methyl-D-erythritol 4-phosphate + CTP + H(+) = 4-CDP-2-C-methyl-D-erythritol + diphosphate. The protein operates within isoprenoid biosynthesis; isopentenyl diphosphate biosynthesis via DXP pathway; isopentenyl diphosphate from 1-deoxy-D-xylulose 5-phosphate: step 2/6. Its function is as follows. Catalyzes the formation of 4-diphosphocytidyl-2-C-methyl-D-erythritol from CTP and 2-C-methyl-D-erythritol 4-phosphate (MEP). This Pseudomonas paraeruginosa (strain DSM 24068 / PA7) (Pseudomonas aeruginosa (strain PA7)) protein is 2-C-methyl-D-erythritol 4-phosphate cytidylyltransferase.